Consider the following 89-residue polypeptide: Small ribosomal subunit protein uS15 (89 aa).

Belongs to the universal ribosomal protein uS15 family. Part of the 30S ribosomal subunit. Forms a bridge to the 50S subunit in the 70S ribosome, contacting the 23S rRNA.

In terms of biological role, one of the primary rRNA binding proteins, it binds directly to 16S rRNA where it helps nucleate assembly of the platform of the 30S subunit by binding and bridging several RNA helices of the 16S rRNA. Forms an intersubunit bridge (bridge B4) with the 23S rRNA of the 50S subunit in the ribosome. The protein is Small ribosomal subunit protein uS15 of Chromobacterium violaceum (strain ATCC 12472 / DSM 30191 / JCM 1249 / CCUG 213 / NBRC 12614 / NCIMB 9131 / NCTC 9757 / MK).